Here is a 108-residue protein sequence, read N- to C-terminus: TYRO protein tyrosine kinase-binding protein (108 aa).

The signal sequence occupies residues M1–A25. Over Q26–P36 the chain is Extracellular. The chain crosses the membrane as a helical span at residues G37 to V57. D46 is a Ca(2+) binding site. Topologically, residues Y58–K108 are cytoplasmic. A disordered region spans residues T71–K108. In terms of domain architecture, ITAM spans R75–Q103. The segment covering S84–K108 has biased composition (polar residues). A phosphotyrosine mark is found at Y86 and Y97.

The protein belongs to the TYROBP family. In terms of assembly, homodimer; disulfide-linked. Homotrimer; disulfide-linked. Homotetramer; disulfide-linked. Homotrimers and homotetramers form when low levels of partner receptors are available and is competitive with assembly with interacting receptors. They may represent alternative oligomerization states or may be intermediates in the receptor assembly process. Binding of a metal cation aids in homooligomerization through coordination of the metal ion by the subunits of the oligomer. Interacts with TREM1. Interacts with TREM2. Interacts with CLECSF5. Interacts with CD300LB and CD300C2. Interacts with CD300E. Interacts (via ITAM domain) with SYK (via SH2 domains); activates SYK mediating neutrophils and macrophages integrin-mediated activation. Interacts with KLRC2. Interacts with CD300H. Interacts with KLRD1. Interacts with SIGLEC1. In terms of processing, following ligand binding by associated receptors, tyrosine phosphorylated in the ITAM domain which leads to activation of additional tyrosine kinases and subsequent cell activation.

It localises to the cell membrane. Adapter protein which non-covalently associates with activating receptors found on the surface of a variety of immune cells to mediate signaling and cell activation following ligand binding by the receptors. TYROBP is tyrosine-phosphorylated in the ITAM domain following ligand binding by the associated receptors which leads to activation of additional tyrosine kinases and subsequent cell activation. Also has an inhibitory role in some cells. Non-covalently associates with activating receptors of the CD300 family to mediate cell activation. Also mediates cell activation through association with activating receptors of the CD200R family. Required for neutrophil activation mediated by integrin. Required for the activation of myeloid cells mediated by the CLEC5A/MDL1 receptor. Associates with natural killer (NK) cell receptors such as the KLRD1/KLRC2 heterodimer to mediate NK cell activation. Associates with TREM1 to mediate activation of neutrophils and monocytes. Associates with TREM2 on monocyte-derived dendritic cells to mediate up-regulation of chemokine receptor CCR7 and dendritic cell maturation and survival. Association with TREM2 mediates cytokine-induced formation of multinucleated giant cells which are formed by the fusion of macrophages. Stabilizes the TREM2 C-terminal fragment (TREM2-CTF) produced by TREM2 ectodomain shedding which suppresses the release of pro-inflammatory cytokines. In microglia, required with TREM2 for phagocytosis of apoptotic neurons. Required with ITGAM/CD11B in microglia to control production of microglial superoxide ions which promote the neuronal apoptosis that occurs during brain development. Promotes pro-inflammatory responses in microglia following nerve injury which accelerates degeneration of injured neurons. Positively regulates the expression of the IRAK3/IRAK-M kinase and IL10 production by liver dendritic cells and inhibits their T cell allosimulatory ability. Negatively regulates B cell proliferation. Required for CSF1-mediated osteoclast cytoskeletal organization. Positively regulates multinucleation during osteoclast development. This is TYRO protein tyrosine kinase-binding protein from Bos taurus (Bovine).